The primary structure comprises 102 residues: Small ribosomal subunit protein uS10 (102 aa).

The interval 35–58 (SGPIPLPTKTLEIPSRKSPDGEGT) is disordered.

It belongs to the universal ribosomal protein uS10 family. As to quaternary structure, part of the 30S ribosomal subunit.

Involved in the binding of tRNA to the ribosomes. The protein is Small ribosomal subunit protein uS10 of Halorubrum lacusprofundi (strain ATCC 49239 / DSM 5036 / JCM 8891 / ACAM 34).